The following is a 513-amino-acid chain: Sphingolipid C9-methyltransferase 1 (513 aa).

2 helical membrane passes run 63–83 (FLVAALLGIPQWLSWKLGGGL) and 85–105 (TAIFLSIFTTIPVLAVIWTVM). Residues 228 to 229 (YT), 265 to 273 (LLDIGCGWG), 291 to 296 (TLARNQ), and 321 to 322 (YR) contribute to the S-adenosyl-L-methionine site.

This sequence belongs to the CFA/CMAS family.

It localises to the membrane. The catalysed reaction is a (4E,8E)-4-sphinga-4,8-dienine ceramide + S-adenosyl-L-methionine = a 9-methyl-(4E,8E)-sphinga-4,8-dienine ceramide + S-adenosyl-L-homocysteine + H(+). Its pathway is lipid metabolism; sphingolipid metabolism. Its function is as follows. Catalyzes methylation of the sphingoid base component of glucosylceramides (GluCers) at the C9-position. Sphingolipid C9-methylation requires 4,8-desaturated ceramides as substrates. Glucosylceramides play important roles in the growth, differentiation and pathogenicity. The methyl group at the C9-position distinguishes fungal glucosylceramides from those of plants and animals, and may thus play a role in host-pathogen interactions enabling the host to recognize the fungal attack and initiate specific defense responses. However, C-9 methylation of GlcCers is not essential for the sensitivity of F.graminearum to plant defensins MsDef1 and RsAFP2. The chain is Sphingolipid C9-methyltransferase 1 from Gibberella zeae (strain ATCC MYA-4620 / CBS 123657 / FGSC 9075 / NRRL 31084 / PH-1) (Wheat head blight fungus).